Reading from the N-terminus, the 428-residue chain is Protein CANDIDATE G-PROTEIN COUPLED RECEPTOR 6 (428 aa).

Positions 1–22 (MTILPFLAAVFVLQLLSTLTVA) are cleaved as a signal peptide. N31, N89, and N157 each carry an N-linked (GlcNAc...) asparagine glycan. Transmembrane regions (helical) follow at residues 173–193 (LYLV…CFCW), 202–222 (IHLL…CAAV), 238–258 (IVFY…IVLI), 276–296 (LLVI…VIGE), 310–330 (IFFL…VWSM), 356–376 (FYVL…VMKM), and 385–405 (VSNA…FYMF).

This sequence belongs to the LU7TM family.

The protein localises to the membrane. G-protein coupled receptor. Plays a role in plants and microbes interactions. The polypeptide is Protein CANDIDATE G-PROTEIN COUPLED RECEPTOR 6 (Arabidopsis thaliana (Mouse-ear cress)).